Consider the following 843-residue polypeptide: Glycogen phosphorylase, brain form (843 aa).

Ala2 is subject to N-acetylalanine. Ser15 carries the phosphoserine; by PHK; in form phosphorylase A modification. AMP-binding residues include Asp43, Tyr197, and Arg310. Tyr197 is subject to Phosphotyrosine. Position 473 is a phosphotyrosine (Tyr473). Residue Ser524 is modified to Phosphoserine. Lys569 is a binding site for pyridoxal 5'-phosphate. The tract at residues 677–678 (TG) is pyridoxal 5'-phosphate. At Lys681 the chain carries N6-(pyridoxal phosphate)lysine.

This sequence belongs to the glycogen phosphorylase family. In terms of assembly, homodimer. Dimers associate into a tetramer to form the enzymatically active phosphorylase A. Pyridoxal 5'-phosphate serves as cofactor. Post-translationally, phosphorylation of Ser-15 converts phosphorylase B (unphosphorylated) to phosphorylase A.

The enzyme catalyses [(1-&gt;4)-alpha-D-glucosyl](n) + phosphate = [(1-&gt;4)-alpha-D-glucosyl](n-1) + alpha-D-glucose 1-phosphate. With respect to regulation, activity of phosphorylase is controlled both by allosteric means (through the non-covalent binding of metabolites) and by covalent modification. Thus AMP allosterically activates, whereas ATP, ADP, and glucose-6-phosphate allosterically inhibit, phosphorylase B. Functionally, glycogen phosphorylase that regulates glycogen mobilization. Phosphorylase is an important allosteric enzyme in carbohydrate metabolism. Enzymes from different sources differ in their regulatory mechanisms and in their natural substrates. However, all known phosphorylases share catalytic and structural properties. This Mus musculus (Mouse) protein is Glycogen phosphorylase, brain form (Pygb).